We begin with the raw amino-acid sequence, 224 residues long: Probable Brix domain-containing ribosomal biogenesis protein (224 aa).

The Brix domain occupies 1 to 196 (MMLITTSHRP…IWIMEDGRRW (196 aa)).

Probably involved in the biogenesis of the ribosome. The protein is Probable Brix domain-containing ribosomal biogenesis protein of Pyrococcus abyssi (strain GE5 / Orsay).